The following is a 438-amino-acid chain: GTPase Obg (438 aa).

Positions 2–160 constitute an Obg domain; that stretch reads SMFLDQVTID…RKIELELKVL (159 aa). The tract at residues 128 to 147 is disordered; the sequence is NIRFASPRNPAPEIAENGEP. The region spanning 161–339 is the OBG-type G domain; sequence ADVGLVGFPS…LLNATADLLE (179 aa). Residues 167 to 174, 192 to 196, 214 to 217, 284 to 287, and 320 to 322 each bind GTP; these read GFPSVGKS, FTTLV, DLPG, NKMD, and SGV. Residues Ser-174 and Thr-194 each coordinate Mg(2+). In terms of domain architecture, OCT spans 360–438; it reads GFQPEGPEFT…IGNFEFEFVE (79 aa).

Belongs to the TRAFAC class OBG-HflX-like GTPase superfamily. OBG GTPase family. In terms of assembly, monomer. Requires Mg(2+) as cofactor.

It is found in the cytoplasm. Functionally, an essential GTPase which binds GTP, GDP and possibly (p)ppGpp with moderate affinity, with high nucleotide exchange rates and a fairly low GTP hydrolysis rate. Plays a role in control of the cell cycle, stress response, ribosome biogenesis and in those bacteria that undergo differentiation, in morphogenesis control. The chain is GTPase Obg from Enterococcus faecalis (strain ATCC 700802 / V583).